The chain runs to 349 residues: Insulin gene enhancer protein isl-1 (349 aa).

LIM zinc-binding domains lie at 17-70 and 79-133; these read CVGC…CKRD and CAKC…RADH. Positions 181–240 form a DNA-binding region, homeobox; that stretch reads TTRVRTVLNEKQLHTLRTCYNANPRPDALMKEQLVEMTGLSPRVIRVWFQNKRCKDKKRS. Residues 312 to 349 are disordered; that stretch reads VNFSEGGPGSNSTGSEVASMSSQLPDTPNSMVASPIEA. Positions 321–343 are enriched in polar residues; that stretch reads SNSTGSEVASMSSQLPDTPNSMV.

The protein resides in the nucleus. Its function is as follows. DNA-binding transcriptional activator. Recognizes and binds to the consensus octamer binding site 5'-ATAATTAA-3' in promoter of target genes. Plays a fundamental role in the gene regulatory network essential for retinal ganglion cell (RGC) differentiation. May be involved in subtype specialization of primary motoneurons. May bind to insulin gene enhancer sequences. Essential for heart development. This chain is Insulin gene enhancer protein isl-1 (isl1), found in Danio rerio (Zebrafish).